A 618-amino-acid polypeptide reads, in one-letter code: Beta-xylosidase (618 aa).

2 disordered regions span residues 76–100 (ERDR…QEES) and 463–509 (LEPQ…PPIQ).

The protein belongs to the glycosyl hydrolase 52 family.

It localises to the secreted. It catalyses the reaction Hydrolysis of (1-&gt;4)-beta-D-xylans, to remove successive D-xylose residues from the non-reducing termini.. The protein operates within glycan degradation; xylan degradation. In Geobacillus stearothermophilus (Bacillus stearothermophilus), this protein is Beta-xylosidase (xylA).